Consider the following 703-residue polypeptide: Polyribonucleotide nucleotidyltransferase (703 aa).

Residues aspartate 485 and aspartate 491 each contribute to the Mg(2+) site. One can recognise a KH domain in the interval 552-611; sequence PRAYTINIDTDKIRTLIGTGGKTINKIIEETGVKIDIREDGTVFVLSSDADSANRALKMI. One can recognise an S1 motif domain in the interval 621–689; that stretch reads GEVYLGKVTK…NQGRVNLSRK (69 aa).

It belongs to the polyribonucleotide nucleotidyltransferase family. It depends on Mg(2+) as a cofactor.

The protein resides in the cytoplasm. The catalysed reaction is RNA(n+1) + phosphate = RNA(n) + a ribonucleoside 5'-diphosphate. In terms of biological role, involved in mRNA degradation. Catalyzes the phosphorolysis of single-stranded polyribonucleotides processively in the 3'- to 5'-direction. The polypeptide is Polyribonucleotide nucleotidyltransferase (Clostridium acetobutylicum (strain ATCC 824 / DSM 792 / JCM 1419 / IAM 19013 / LMG 5710 / NBRC 13948 / NRRL B-527 / VKM B-1787 / 2291 / W)).